Here is a 125-residue protein sequence, read N- to C-terminus: Secretion system apparatus protein SsaO (125 aa).

This Salmonella typhimurium (strain LT2 / SGSC1412 / ATCC 700720) protein is Secretion system apparatus protein SsaO (ssaO).